The following is a 67-amino-acid chain: ATP synthase F(0) complex subunit 8 (67 aa).

A helical membrane pass occupies residues 8–24 (TWFITIISSMATLFILF). Lysine 54 carries the post-translational modification N6-acetyllysine; alternate. N6-succinyllysine; alternate is present on lysine 54. Lysine 57 is modified (N6-acetyllysine).

The protein belongs to the ATPase protein 8 family. Component of the ATP synthase complex composed at least of ATP5F1A/subunit alpha, ATP5F1B/subunit beta, ATP5MC1/subunit c (homooctomer), MT-ATP6/subunit a, MT-ATP8/subunit 8, ATP5ME/subunit e, ATP5MF/subunit f, ATP5MG/subunit g, ATP5MK/subunit k, ATP5MJ/subunit j, ATP5F1C/subunit gamma, ATP5F1D/subunit delta, ATP5F1E/subunit epsilon, ATP5PF/subunit F6, ATP5PB/subunit b, ATP5PD/subunit d, ATP5PO/subunit OSCP. ATP synthase complex consists of a soluble F(1) head domain (subunits alpha(3) and beta(3)) - the catalytic core - and a membrane F(0) domain - the membrane proton channel (subunits c, a, 8, e, f, g, k and j). These two domains are linked by a central stalk (subunits gamma, delta, and epsilon) rotating inside the F1 region and a stationary peripheral stalk (subunits F6, b, d, and OSCP). Interacts with PRICKLE3.

Its subcellular location is the mitochondrion membrane. In terms of biological role, subunit 8, of the mitochondrial membrane ATP synthase complex (F(1)F(0) ATP synthase or Complex V) that produces ATP from ADP in the presence of a proton gradient across the membrane which is generated by electron transport complexes of the respiratory chain. ATP synthase complex consist of a soluble F(1) head domain - the catalytic core - and a membrane F(1) domain - the membrane proton channel. These two domains are linked by a central stalk rotating inside the F(1) region and a stationary peripheral stalk. During catalysis, ATP synthesis in the catalytic domain of F(1) is coupled via a rotary mechanism of the central stalk subunits to proton translocation. In vivo, can only synthesize ATP although its ATP hydrolase activity can be activated artificially in vitro. Part of the complex F(0) domain. The protein is ATP synthase F(0) complex subunit 8 of Rattus norvegicus (Rat).